The chain runs to 292 residues: Transcription antiterminator LacT (292 aa).

PRD domains are found at residues 66–170 and 172–284; these read NIPI…DDGE and VFGK…APAQ.

The protein belongs to the transcriptional antiterminator BglG family.

Functionally, mediates positive regulation of the lac operon by functioning as an antiterminator factor of transcription. This is Transcription antiterminator LacT (lacT) from Lacticaseibacillus casei (Lactobacillus casei).